We begin with the raw amino-acid sequence, 265 residues long: Ubiquinone biosynthesis protein COQ4 homolog, mitochondrial (265 aa).

The N-terminal 30 residues, 1-30, are a transit peptide targeting the mitochondrion; the sequence is MATLLRPVLRRLCGLPGLQRPAAEMPLRAR. S108 bears the Phosphoserine mark. H163, D164, H167, and E179 together coordinate Zn(2+).

It belongs to the COQ4 family. Component of a multi-subunit COQ enzyme complex, composed of at least COQ3, COQ4, COQ5, COQ6, COQ7 and COQ9. Zn(2+) serves as cofactor. In terms of tissue distribution, expressed ubiquitously, but at high levels in liver, lung and pancreas.

The protein localises to the mitochondrion inner membrane. The catalysed reaction is 4-hydroxy-3-methoxy-5-(all-trans-decaprenyl)benzoate + H(+) = 2-methoxy-6-(all-trans-decaprenyl)phenol + CO2. The protein operates within cofactor biosynthesis; ubiquinone biosynthesis. Functionally, lyase that catalyzes the C1-decarboxylation of 4-hydroxy-3-methoxy-5-(all-trans-decaprenyl)benzoic acid into 2-methoxy-6-(all-trans-decaprenyl)phenol during ubiquinone biosynthesis. The protein is Ubiquinone biosynthesis protein COQ4 homolog, mitochondrial of Homo sapiens (Human).